A 1011-amino-acid chain; its full sequence is Lysosomal alpha-mannosidase (1011 aa).

Positions 1-49 (MGAYARASGVCARGCLDSAGPWTMSRALRPPLPPLCFFLLLLAAAGARA) are cleaved as a signal peptide. 2 cysteine pairs are disulfide-bonded: Cys55/Cys358 and Cys268/Cys273. Zn(2+)-binding residues include His72 and Asp74. N-linked (GlcNAc...) asparagine glycosylation occurs at Asn133. A Zn(2+)-binding site is contributed by Asp196. The Nucleophile role is filled by Asp196. Asn310 and Asn367 each carry an N-linked (GlcNAc...) asparagine glycan. Disulfide bonds link Cys412–Cys472 and Cys493–Cys501. A Zn(2+)-binding site is contributed by His446. 8 N-linked (GlcNAc...) asparagine glycosylation sites follow: Asn497, Asn645, Asn651, Asn692, Asn766, Asn832, Asn930, and Asn989.

It belongs to the glycosyl hydrolase 38 family. It depends on Zn(2+) as a cofactor. Post-translationally, first processed into 3 peptides of 70 kDa, 42 kDa (D) and 13/15 kDa (E). The 70 kDa peptide is further processed into three peptides (A, B and C). The A, B and C peptides are disulfide-linked. Heavily glycosylated.

Its subcellular location is the lysosome. It carries out the reaction Hydrolysis of terminal, non-reducing alpha-D-mannose residues in alpha-D-mannosides.. Necessary for the catabolism of N-linked carbohydrates released during glycoprotein turnover. Cleaves all known types of alpha-mannosidic linkages. The protein is Lysosomal alpha-mannosidase (MAN2B1) of Homo sapiens (Human).